The following is a 348-amino-acid chain: Ferrochelatase (348 aa).

Residues His218 and Glu299 each contribute to the Fe cation site.

It belongs to the ferrochelatase family.

It localises to the cytoplasm. The enzyme catalyses heme b + 2 H(+) = protoporphyrin IX + Fe(2+). Its pathway is porphyrin-containing compound metabolism; protoheme biosynthesis; protoheme from protoporphyrin-IX: step 1/1. In terms of biological role, catalyzes the ferrous insertion into protoporphyrin IX. The sequence is that of Ferrochelatase from Methylocella silvestris (strain DSM 15510 / CIP 108128 / LMG 27833 / NCIMB 13906 / BL2).